The chain runs to 413 residues: Succinate--CoA ligase [ADP-forming] subunit beta, mitochondrial (413 aa).

The transit peptide at 1–2 (RR) directs the protein to the mitochondrion. The ATP-grasp domain maps to 11-238 (MGLLQEAGIS…SNSAYRQKKI (228 aa)). ATP-binding positions include K48 and 55-57 (GRG). N208 and D222 together coordinate Mg(2+). Substrate contacts are provided by residues N273 and 330–332 (GIM).

The protein belongs to the succinate/malate CoA ligase beta subunit family. ATP-specific subunit beta subfamily. Heterodimer of an alpha and a beta subunit. The beta subunit determines specificity for ATP. Requires Mg(2+) as cofactor. Widely expressed. Not present in liver.

The protein resides in the mitochondrion. It catalyses the reaction succinate + ATP + CoA = succinyl-CoA + ADP + phosphate. It functions in the pathway carbohydrate metabolism; tricarboxylic acid cycle; succinate from succinyl-CoA (ligase route): step 1/1. ATP-specific succinyl-CoA synthetase functions in the citric acid cycle (TCA), coupling the hydrolysis of succinyl-CoA to the synthesis of ATP and thus represents the only step of substrate-level phosphorylation in the TCA. The beta subunit provides nucleotide specificity of the enzyme and binds the substrate succinate, while the binding sites for coenzyme A and phosphate are found in the alpha subunit. This Columba livia (Rock dove) protein is Succinate--CoA ligase [ADP-forming] subunit beta, mitochondrial.